Reading from the N-terminus, the 75-residue chain is UPF0352 protein VP2129 (75 aa).

Belongs to the UPF0352 family.

The protein is UPF0352 protein VP2129 of Vibrio parahaemolyticus serotype O3:K6 (strain RIMD 2210633).